The sequence spans 128 residues: Arginine decarboxylase proenzyme (128 aa).

Catalysis depends on Ser-76, which acts as the Schiff-base intermediate with substrate; via pyruvic acid. Ser-76 is modified (pyruvic acid (Ser); by autocatalysis). His-81 serves as the catalytic Proton acceptor; for processing activity. The active-site Proton donor; for catalytic activity is Cys-96.

It belongs to the prokaryotic AdoMetDC family. Type 1 subfamily. As to quaternary structure, heterooctamer of four alpha and four beta chains arranged as a tetramer of alpha/beta heterodimers. It depends on pyruvate as a cofactor. In terms of processing, is synthesized initially as an inactive proenzyme. Formation of the active enzyme involves a self-maturation process in which the active site pyruvoyl group is generated from an internal serine residue via an autocatalytic post-translational modification. Two non-identical subunits are generated from the proenzyme in this reaction, and the pyruvate is formed at the N-terminus of the alpha chain, which is derived from the carboxyl end of the proenzyme. The post-translation cleavage follows an unusual pathway, termed non-hydrolytic serinolysis, in which the side chain hydroxyl group of the serine supplies its oxygen atom to form the C-terminus of the beta chain, while the remainder of the serine residue undergoes an oxidative deamination to produce ammonia and the pyruvoyl group blocking the N-terminus of the alpha chain.

The enzyme catalyses L-arginine + H(+) = agmatine + CO2. It participates in amine and polyamine biosynthesis; agmatine biosynthesis; agmatine from L-arginine: step 1/1. Its function is as follows. Specifically catalyzes the decarboxylation of L-arginine to agmatine. Has no S-adenosylmethionine decarboxylase (AdoMetDC) activity. The protein is Arginine decarboxylase proenzyme of Metallosphaera sedula (strain ATCC 51363 / DSM 5348 / JCM 9185 / NBRC 15509 / TH2).